Here is a 388-residue protein sequence, read N- to C-terminus: Succinate--CoA ligase [ADP-forming] subunit beta (388 aa).

An ATP-grasp domain is found at 9–245 (KALLKKYGVS…KSQENERELK (237 aa)). ATP-binding positions include K46, 53–55 (GRG), E100, Y103, and E108. Residues N200 and D214 each contribute to the Mg(2+) site. Residues N265 and 322–324 (GIV) contribute to the substrate site.

The protein belongs to the succinate/malate CoA ligase beta subunit family. Heterotetramer of two alpha and two beta subunits. Mg(2+) is required as a cofactor.

It carries out the reaction succinate + ATP + CoA = succinyl-CoA + ADP + phosphate. The enzyme catalyses GTP + succinate + CoA = succinyl-CoA + GDP + phosphate. Its pathway is carbohydrate metabolism; tricarboxylic acid cycle; succinate from succinyl-CoA (ligase route): step 1/1. Functionally, succinyl-CoA synthetase functions in the citric acid cycle (TCA), coupling the hydrolysis of succinyl-CoA to the synthesis of either ATP or GTP and thus represents the only step of substrate-level phosphorylation in the TCA. The beta subunit provides nucleotide specificity of the enzyme and binds the substrate succinate, while the binding sites for coenzyme A and phosphate are found in the alpha subunit. In Acinetobacter baylyi (strain ATCC 33305 / BD413 / ADP1), this protein is Succinate--CoA ligase [ADP-forming] subunit beta.